Reading from the N-terminus, the 193-residue chain is Ion-translocating oxidoreductase complex subunit A (193 aa).

Helical transmembrane passes span 5-25, 47-67, 72-92, 102-122, 134-154, and 171-191; these read LLLF…FLGL, FVMT…LVPL, LRTM…EMVV, LLGI…VALL, ALYG…FAAI, and AIAL…SGLV.

This sequence belongs to the NqrDE/RnfAE family. The complex is composed of six subunits: RnfA, RnfB, RnfC, RnfD, RnfE and RnfG.

The protein localises to the cell inner membrane. Part of a membrane-bound complex that couples electron transfer with translocation of ions across the membrane. The protein is Ion-translocating oxidoreductase complex subunit A of Cronobacter sakazakii (strain ATCC BAA-894) (Enterobacter sakazakii).